We begin with the raw amino-acid sequence, 268 residues long: Probable intron-encoded DNA endonuclease 1 (268 aa).

This sequence belongs to the LAGLIDADG endonuclease family.

It is found in the mitochondrion. In terms of biological role, mitochondrial DNA endonuclease involved in intron homing. The polypeptide is Probable intron-encoded DNA endonuclease 1 (hegI1) (Mycosarcoma maydis (Corn smut fungus)).